A 512-amino-acid chain; its full sequence is Cytochrome P450 82C3 (512 aa).

A helical membrane pass occupies residues 1–21 (MDTSLFSLFVSILVFVFIALF). Position 451 (Cys451) interacts with heme.

The protein belongs to the cytochrome P450 family. Heme serves as cofactor.

The protein resides in the membrane. This is Cytochrome P450 82C3 (CYP82C3) from Arabidopsis thaliana (Mouse-ear cress).